The chain runs to 340 residues: Short-chain dehydrogenase/reductase ffsI (340 aa).

Residues Leu46, Arg71, Asp96, Asn123, Tyr211, and Lys215 each coordinate NADP(+). Tyr211 serves as the catalytic Proton acceptor. Catalysis depends on Lys215, which acts as the Lowers pKa of active site Tyr.

It belongs to the short-chain dehydrogenases/reductases (SDR) family.

It participates in mycotoxin biosynthesis. Functionally, short-chain dehydrogenase/reductase; part of the gene cluster that mediates the biosynthesis of the cytotoxic leucine-containing cytochalasans, including aspochalasin C, aspochalasin E, TMC-169, flavichalasine F, aspergillin PZ, aspochalasin M and flavichalasine G. The first step in the pathway is catalyzed by the hybrid PKS-NRPS ffsA that utilizes 8 units of malonyl-CoA to iteratively assemble the octaketide chain before addition of L-leucine by the C-terminal NRPS modules. Because ffsA lacks a designated enoylreductase (ER) domain, the required activity is provided the enoyl reductase fssC. The methyltransferase (MT) domain of ffsA catalyzes the alpha-methylation at C10 and C14 using S-adenosyl-L-methionine as the methyl-donating cosubstrate. Reduction by the hydrolyase ffsE, followed by dehydration and intra-molecular Diels-Alder cyclization by the Diels-Alderase ffsF then yield the required isoindolone-fused macrocycle. A number of oxidative steps catalyzed by the tailoring cytochrome P450 monooxygenase ffsD, the FAD-linked oxidoreductase ffsJ and the short-chain dehydrogenase/reductase ffsI, are further required to afford the final products. In Aspergillus flavipes, this protein is Short-chain dehydrogenase/reductase ffsI.